The following is a 210-amino-acid chain: Type III pantothenate kinase (210 aa).

5–12 (DIGNTYLH) is an ATP binding site. Residues tyrosine 69 and 73-76 (GVDR) contribute to the substrate site. Residue aspartate 75 is the Proton acceptor of the active site. Aspartate 90 contacts K(+). Position 93 (serine 93) interacts with ATP. Threonine 145 lines the substrate pocket.

This sequence belongs to the type III pantothenate kinase family. In terms of assembly, homodimer. Requires NH4(+) as cofactor. K(+) serves as cofactor.

Its subcellular location is the cytoplasm. The catalysed reaction is (R)-pantothenate + ATP = (R)-4'-phosphopantothenate + ADP + H(+). It functions in the pathway cofactor biosynthesis; coenzyme A biosynthesis; CoA from (R)-pantothenate: step 1/5. In terms of biological role, catalyzes the phosphorylation of pantothenate (Pan), the first step in CoA biosynthesis. This is Type III pantothenate kinase from Wolinella succinogenes (strain ATCC 29543 / DSM 1740 / CCUG 13145 / JCM 31913 / LMG 7466 / NCTC 11488 / FDC 602W) (Vibrio succinogenes).